A 603-amino-acid chain; its full sequence is 65-kDa microtubule-associated protein 7 (603 aa).

3 coiled-coil regions span residues 48–79 (KECL…EAEI), 131–186 (DIKA…EKSD), and 468–502 (RLVS…LLIK). A disordered region spans residues 501–559 (IKRRESIYGSKPSPRRSNSVRKTNGYNGDASVPPTPRRNSAGATNNDIMTTPRSYSSHR). Serine 513 carries the post-translational modification Phosphoserine. Polar residues-rich tracts occupy residues 515–526 (RRSNSVRKTNGY) and 537–559 (RRNS…SSHR). Serine 599 is modified (phosphoserine).

Belongs to the MAP65/ASE1 family. As to quaternary structure, forms dimer. Binds to microtubules (MT).

Its subcellular location is the nucleus. It is found in the cytoplasm. It localises to the cytoskeleton. The protein resides in the spindle pole. The chain is 65-kDa microtubule-associated protein 7 (MAP65-7) from Arabidopsis thaliana (Mouse-ear cress).